The chain runs to 231 residues: Probable septum site-determining protein MinC (231 aa).

Residues K102–T125 are disordered. Over residues A114 to T123 the composition is skewed to low complexity.

This sequence belongs to the MinC family. In terms of assembly, interacts with MinD and FtsZ.

In terms of biological role, cell division inhibitor that blocks the formation of polar Z ring septums. Rapidly oscillates between the poles of the cell to destabilize FtsZ filaments that have formed before they mature into polar Z rings. Prevents FtsZ polymerization. The protein is Probable septum site-determining protein MinC of Escherichia coli O45:K1 (strain S88 / ExPEC).